Consider the following 111-residue polypeptide: Ferredoxin-thioredoxin reductase, catalytic chain (111 aa).

Residue cysteine 52 coordinates [4Fe-4S] cluster. Residue cysteine 54 is the Nucleophile of the active site. A disulfide bond links cysteine 54 and cysteine 84. [4Fe-4S] cluster contacts are provided by cysteine 71, cysteine 73, and cysteine 82.

The protein belongs to the ferredoxin thioredoxin reductase beta subunit family. In terms of assembly, heterodimer of subunit A (variable subunit) and subunit B (catalytic subunit). Heterodimeric FTR forms a complex with ferredoxin and thioredoxin. [4Fe-4S] cluster is required as a cofactor.

It is found in the plastid. The protein resides in the chloroplast. The enzyme catalyses [thioredoxin]-disulfide + 2 reduced [2Fe-2S]-[ferredoxin] + 2 H(+) = [thioredoxin]-dithiol + 2 oxidized [2Fe-2S]-[ferredoxin]. Functionally, catalytic subunit of the ferredoxin-thioredoxin reductase (FTR), which catalyzes the two-electron reduction of thioredoxins by the electrons provided by reduced ferredoxin. This is Ferredoxin-thioredoxin reductase, catalytic chain (ftrB) from Cyanidium caldarium (Red alga).